Reading from the N-terminus, the 227-residue chain is Small ribosomal subunit protein uS3 (227 aa).

The 69-residue stretch at 38-106 (LRKFIKDRFY…NVNINIQEIR (69 aa)) folds into the KH type-2 domain.

This sequence belongs to the universal ribosomal protein uS3 family. Part of the 30S ribosomal subunit. Forms a tight complex with proteins S10 and S14.

Its function is as follows. Binds the lower part of the 30S subunit head. Binds mRNA in the 70S ribosome, positioning it for translation. This is Small ribosomal subunit protein uS3 from Syntrophomonas wolfei subsp. wolfei (strain DSM 2245B / Goettingen).